The chain runs to 396 residues: Ribosomal RNA large subunit methyltransferase I (396 aa).

Residues 2 to 81 enclose the PUA domain; it reads TVRLILAKGR…ESIDIDFFVR (80 aa).

Belongs to the methyltransferase superfamily. RlmI family.

The protein resides in the cytoplasm. The enzyme catalyses cytidine(1962) in 23S rRNA + S-adenosyl-L-methionine = 5-methylcytidine(1962) in 23S rRNA + S-adenosyl-L-homocysteine + H(+). In terms of biological role, specifically methylates the cytosine at position 1962 (m5C1962) of 23S rRNA. The polypeptide is Ribosomal RNA large subunit methyltransferase I (Erwinia tasmaniensis (strain DSM 17950 / CFBP 7177 / CIP 109463 / NCPPB 4357 / Et1/99)).